Here is a 517-residue protein sequence, read N- to C-terminus: Maturase K (517 aa).

Belongs to the intron maturase 2 family. MatK subfamily.

The protein localises to the plastid. It localises to the chloroplast. Functionally, usually encoded in the trnK tRNA gene intron. Probably assists in splicing its own and other chloroplast group II introns. The protein is Maturase K of Trillium maculatum (Spotted wakerobin).